The following is a 345-amino-acid chain: Protein D345L (345 aa).

The protein belongs to the asfivirus D345L family. In terms of assembly, interacts with IKKA/CHUK and IKBKB.

It localises to the host cytoplasm. Functionally, plays a role in the negative regulation of host NF-kappa-B signaling pathway. Mechanistically, recruits host IKKA/CHUK and IKBKB to suppress their kinase activity towards NFKBIA. This chain is Protein D345L, found in African swine fever virus (strain Badajoz 1971 Vero-adapted) (Ba71V).